The chain runs to 482 residues: Protein trichome birefringence-like 15 (482 aa).

Residues 109-129 (GSVSLSLIILILLVTTLLVSA) form a helical; Signal-anchor for type II membrane protein membrane-spanning segment. Residues 217–219 (GDS) carry the GDS motif motif. A DCXHWCLPGXXDXWN motif motif is present at residues 461–475 (DCLHWCLPGIPDTWN).

This sequence belongs to the PC-esterase family. TBL subfamily.

The protein localises to the membrane. Functionally, may act as a bridging protein that binds pectin and other cell wall polysaccharides. Probably involved in maintaining esterification of pectins. May be involved in the specific O-acetylation of cell wall polymers. This Arabidopsis thaliana (Mouse-ear cress) protein is Protein trichome birefringence-like 15 (TBL15).